Here is a 506-residue protein sequence, read N- to C-terminus: Maturase K (506 aa).

This sequence belongs to the intron maturase 2 family. MatK subfamily.

It is found in the plastid. The protein localises to the chloroplast. Usually encoded in the trnK tRNA gene intron. Probably assists in splicing its own and other chloroplast group II introns. The protein is Maturase K of Trifolium fragiferum (Strawberry clover).